Here is a 397-residue protein sequence, read N- to C-terminus: Putative protein FAM47D (397 aa).

It belongs to the FAM47 family.

The chain is Putative protein FAM47D (FAM47DP) from Homo sapiens (Human).